The sequence spans 304 residues: Proteasome subunit beta (304 aa).

Residues 1 to 65 constitute a propeptide, removed in mature form; by autocatalysis; sequence MTWPHFEQLA…LTPTDAVPHG (65 aa). Threonine 66 serves as the catalytic Nucleophile.

Belongs to the peptidase T1B family. As to quaternary structure, the 20S proteasome core is composed of 14 alpha and 14 beta subunits that assemble into four stacked heptameric rings, resulting in a barrel-shaped structure. The two inner rings, each composed of seven catalytic beta subunits, are sandwiched by two outer rings, each composed of seven alpha subunits. The catalytic chamber with the active sites is on the inside of the barrel. Has a gated structure, the ends of the cylinder being occluded by the N-termini of the alpha-subunits. Is capped by the proteasome-associated ATPase, ARC.

The protein resides in the cytoplasm. It catalyses the reaction Cleavage of peptide bonds with very broad specificity.. Its pathway is protein degradation; proteasomal Pup-dependent pathway. The formation of the proteasomal ATPase ARC-20S proteasome complex, likely via the docking of the C-termini of ARC into the intersubunit pockets in the alpha-rings, may trigger opening of the gate for substrate entry. Interconversion between the open-gate and close-gate conformations leads to a dynamic regulation of the 20S proteasome proteolysis activity. In terms of biological role, component of the proteasome core, a large protease complex with broad specificity involved in protein degradation. The protein is Proteasome subunit beta of Mycobacterium sp. (strain JLS).